The sequence spans 122 residues: Small ribosomal subunit protein uS13 (122 aa).

The disordered stretch occupies residues 99-122 (RGQRTHTNARTRKGPAKAIAGKKK).

It belongs to the universal ribosomal protein uS13 family. Part of the 30S ribosomal subunit. Forms a loose heterodimer with protein S19. Forms two bridges to the 50S subunit in the 70S ribosome.

Functionally, located at the top of the head of the 30S subunit, it contacts several helices of the 16S rRNA. In the 70S ribosome it contacts the 23S rRNA (bridge B1a) and protein L5 of the 50S subunit (bridge B1b), connecting the 2 subunits; these bridges are implicated in subunit movement. Contacts the tRNAs in the A and P-sites. The protein is Small ribosomal subunit protein uS13 of Rhizobium meliloti (strain 1021) (Ensifer meliloti).